The chain runs to 277 residues: Pantothenate synthetase (277 aa).

26-33 provides a ligand contact to ATP; the sequence is MGNLHEGH. The Proton donor role is filled by H33. Q57 lines the (R)-pantoate pocket. Q57 serves as a coordination point for beta-alanine. 144–147 contacts ATP; it reads GKKD. Q150 lines the (R)-pantoate pocket. ATP is bound by residues V173 and 181-184; that span reads LSSR.

Belongs to the pantothenate synthetase family. In terms of assembly, homodimer.

It localises to the cytoplasm. It carries out the reaction (R)-pantoate + beta-alanine + ATP = (R)-pantothenate + AMP + diphosphate + H(+). It functions in the pathway cofactor biosynthesis; (R)-pantothenate biosynthesis; (R)-pantothenate from (R)-pantoate and beta-alanine: step 1/1. Its function is as follows. Catalyzes the condensation of pantoate with beta-alanine in an ATP-dependent reaction via a pantoyl-adenylate intermediate. The protein is Pantothenate synthetase of Paraburkholderia xenovorans (strain LB400).